Consider the following 297-residue polypeptide: Large ribosomal subunit protein uL18 (297 aa).

K164 participates in a covalent cross-link: Glycyl lysine isopeptide (Lys-Gly) (interchain with G-Cter in ubiquitin). S167, S176, and S235 each carry phosphoserine.

This sequence belongs to the universal ribosomal protein uL18 family. As to quaternary structure, component of the large ribosomal subunit (LSU). Mature yeast ribosomes consist of a small (40S) and a large (60S) subunit. The 40S small subunit contains 1 molecule of ribosomal RNA (18S rRNA) and 33 different proteins (encoded by 57 genes). The large 60S subunit contains 3 rRNA molecules (25S, 5.8S and 5S rRNA) and 46 different proteins (encoded by 81 genes). Component of a hexameric 5S RNP precursor complex, composed of 5S RNA, RRS1, RPF2, RPL5, RPL11A/RPL11B and SYO1; this complex acts as a precursor for ribosome assembly. RPL5/uL18 forms a heterotrimeric complex with SYO1 and RPL11A/RPL11B/uL5. Interaction of this complex with KAP104 allows the nuclear import of the heterotrimer.

It localises to the cytoplasm. It is found in the nucleus. Functionally, component of the ribosome, a large ribonucleoprotein complex responsible for the synthesis of proteins in the cell. The small ribosomal subunit (SSU) binds messenger RNAs (mRNAs) and translates the encoded message by selecting cognate aminoacyl-transfer RNA (tRNA) molecules. The large subunit (LSU) contains the ribosomal catalytic site termed the peptidyl transferase center (PTC), which catalyzes the formation of peptide bonds, thereby polymerizing the amino acids delivered by tRNAs into a polypeptide chain. The nascent polypeptides leave the ribosome through a tunnel in the LSU and interact with protein factors that function in enzymatic processing, targeting, and the membrane insertion of nascent chains at the exit of the ribosomal tunnel. The polypeptide is Large ribosomal subunit protein uL18 (Saccharomyces cerevisiae (strain ATCC 204508 / S288c) (Baker's yeast)).